The following is a 308-amino-acid chain: Maspardin (308 aa).

Residues 87-159 form the AB hydrolase-1 domain; the sequence is FCDGFRKLLD…NSFWLMPAFM (73 aa). Serine 304 is modified (phosphoserine).

This sequence belongs to the AB hydrolase superfamily. As to quaternary structure, interacts with CD4. Interacts with ALDH16A1. Expressed in cell lines FT.1 and in a L cell fibroblast derivative (at protein level).

The protein resides in the cytoplasm. May play a role as a negative regulatory factor in CD4-dependent T-cell activation. The sequence is that of Maspardin (Spg21) from Mus musculus (Mouse).